The sequence spans 870 residues: DNA mismatch repair protein MutS (870 aa).

616 to 623 (GPNMAGKS) serves as a coordination point for ATP.

It belongs to the DNA mismatch repair MutS family.

Its function is as follows. This protein is involved in the repair of mismatches in DNA. It is possible that it carries out the mismatch recognition step. This protein has a weak ATPase activity. The protein is DNA mismatch repair protein MutS of Parabacteroides distasonis (strain ATCC 8503 / DSM 20701 / CIP 104284 / JCM 5825 / NCTC 11152).